We begin with the raw amino-acid sequence, 469 residues long: Trigger factor (469 aa).

In terms of domain architecture, PPIase FKBP-type spans 162-243 (GDFVSIDLSA…VKSVKERELP (82 aa)). The tract at residues 429–469 (NTIDTSEFFGKHAQSDKADQKTEEADPNSDAIDEEVDEAAE) is disordered. The segment covering 437–452 (FGKHAQSDKADQKTEE) has biased composition (basic and acidic residues). The segment covering 453–469 (ADPNSDAIDEEVDEAAE) has biased composition (acidic residues).

Belongs to the FKBP-type PPIase family. Tig subfamily.

The protein localises to the cytoplasm. The catalysed reaction is [protein]-peptidylproline (omega=180) = [protein]-peptidylproline (omega=0). Functionally, involved in protein export. Acts as a chaperone by maintaining the newly synthesized protein in an open conformation. Functions as a peptidyl-prolyl cis-trans isomerase. This is Trigger factor from Mycobacterium leprae (strain Br4923).